The following is a 353-amino-acid chain: Small ribosomal subunit protein uS2 (353 aa).

The tract at residues 256–353 (DTDEQSSAAN…TPAESTDEQA (98 aa)) is disordered. 2 stretches are compositionally biased toward low complexity: residues 263–311 (AANT…AEAP) and 321–339 (ESATPAEAEVEAESATPAE). Over residues 340-353 (AEAETPAESTDEQA) the composition is skewed to acidic residues.

The protein belongs to the universal ribosomal protein uS2 family.

In Beutenbergia cavernae (strain ATCC BAA-8 / DSM 12333 / CCUG 43141 / JCM 11478 / NBRC 16432 / NCIMB 13614 / HKI 0122), this protein is Small ribosomal subunit protein uS2.